The sequence spans 216 residues: Small ribosomal subunit protein uS5 (216 aa).

The disordered stretch occupies residues 1-55 (MDRKLENQKDLLNQDPKVELNSQSVAKNPLNSREVKPIQRRRPLRKNSRDKNSKP). Polar residues predominate over residues 20–31 (LNSQSVAKNPLN). Residues 57–120 (FEERVIAIHR…KDAQNRLVSV (64 aa)) form the S5 DRBM domain.

It belongs to the universal ribosomal protein uS5 family. In terms of assembly, part of the 30S ribosomal subunit. Contacts proteins S4 and S8.

In terms of biological role, with S4 and S12 plays an important role in translational accuracy. Located at the back of the 30S subunit body where it stabilizes the conformation of the head with respect to the body. The chain is Small ribosomal subunit protein uS5 from Mesomycoplasma hyopneumoniae (strain J / ATCC 25934 / NCTC 10110) (Mycoplasma hyopneumoniae).